A 208-amino-acid chain; its full sequence is Redox-sensing transcriptional repressor Rex (208 aa).

A DNA-binding region (H-T-H motif) is located at residues 16–55 (VYSRYLENLYRKGITTVSSADIAQGVGVTSAQVRKDLAYF). 90 to 95 (GAGNLG) contacts NAD(+).

It belongs to the transcriptional regulatory Rex family. Homodimer.

The protein localises to the cytoplasm. Functionally, modulates transcription in response to changes in cellular NADH/NAD(+) redox state. This is Redox-sensing transcriptional repressor Rex from Carboxydothermus hydrogenoformans (strain ATCC BAA-161 / DSM 6008 / Z-2901).